The sequence spans 284 residues: MKQKVVSIGDINVANDLPFVLFGGMNVLESRDLAMRICEHYVTVTQKLGIPYVFKASFDKANRSSIHSYRGPGLEEGMKIFQELKQTFGVKIITDVHEPSQAQPVADVVDVIQLPAFLARQTDLVEAMAKTGAVINVKKPQFVSPGQMGNIVDKFKEGGNEKVILCDRGANFGYDNLVVDMLGFSIMKKVSGNSPVIFDVTHALQCRDPFGAASGGRRAQVAELARAGMAVGLAGLFIEAHPDPEHAKCDGPSALPLAKLEPFLRQMKAIDDLVKGFEELDTSK.

This sequence belongs to the KdsA family.

The protein resides in the cytoplasm. The catalysed reaction is D-arabinose 5-phosphate + phosphoenolpyruvate + H2O = 3-deoxy-alpha-D-manno-2-octulosonate-8-phosphate + phosphate. It functions in the pathway carbohydrate biosynthesis; 3-deoxy-D-manno-octulosonate biosynthesis; 3-deoxy-D-manno-octulosonate from D-ribulose 5-phosphate: step 2/3. The protein operates within bacterial outer membrane biogenesis; lipopolysaccharide biosynthesis. The sequence is that of 2-dehydro-3-deoxyphosphooctonate aldolase from Escherichia coli O157:H7.